We begin with the raw amino-acid sequence, 343 residues long: MRVLGIETSCDETGVAIYDTERGLIADALHSQMAMHAEFGGVVPELASRDHTRKLLPLIRQVLDDAELRGDQLDAIAYTAGPGLVGALMVGASTAHGLARAWDIPALGVHHMEGHLLAPMLEAAPPDFPFVALLVSGGHTQLVEVHGLGRYRLLGESVDDAAGEAFDKAAKMLELPYPGGPHVAQLAERGDPTRFRFPRPMTDRPGLDFSFSGLKTHTLTTANQLKAAGPLSDQDRADIARAFEEAVVDTLVIKCRRALDTTGLKRLVVAGGVSANHRLRERLDRETAKRQAQAFYPRGRFCTDNGAMIAYVGAQRLLAGERDDATMQATPRWPLASLTPPAA.

Residues histidine 111 and histidine 115 each contribute to the Fe cation site. Residues 134–138, aspartate 167, glycine 180, and asparagine 276 each bind substrate; that span reads LVSGG. Aspartate 304 is a binding site for Fe cation.

The protein belongs to the KAE1 / TsaD family. It depends on Fe(2+) as a cofactor.

The protein localises to the cytoplasm. It carries out the reaction L-threonylcarbamoyladenylate + adenosine(37) in tRNA = N(6)-L-threonylcarbamoyladenosine(37) in tRNA + AMP + H(+). Functionally, required for the formation of a threonylcarbamoyl group on adenosine at position 37 (t(6)A37) in tRNAs that read codons beginning with adenine. Is involved in the transfer of the threonylcarbamoyl moiety of threonylcarbamoyl-AMP (TC-AMP) to the N6 group of A37, together with TsaE and TsaB. TsaD likely plays a direct catalytic role in this reaction. This is tRNA N6-adenosine threonylcarbamoyltransferase from Chromohalobacter salexigens (strain ATCC BAA-138 / DSM 3043 / CIP 106854 / NCIMB 13768 / 1H11).